Reading from the N-terminus, the 670-residue chain is G-protein coupled receptor moody (670 aa).

Residues 1–40 (MSDETTISLEDGYPPLEALTTMVPPADATGFSQSLLTFAA) lie on the Extracellular side of the membrane. Residues 41 to 61 (VMTFLIMIVGICGNLLTVVAL) traverse the membrane as a helical segment. At 62–69 (LKCPKVRN) the chain is on the cytoplasmic side. A helical transmembrane segment spans residues 70-90 (VAAAFIISLCIADLLFCALVL). The Extracellular segment spans residues 91 to 111 (PFQGLRFVQGTWRHGQVLCRL). An intrachain disulfide couples Cys109 to Cys188. Residues 112-132 (IPFIQYGNIGVSLLCIAMITI) traverse the membrane as a helical segment. The Cytoplasmic portion of the chain corresponds to 133–152 (NRYVMITHHGLYARIYKRHW). A helical transmembrane segment spans residues 153 to 173 (IAVMIAACWLFSYGMQLPTLL). At 174 to 202 (GEWGRFGYDSRLQTCSIMTDDHGHSSKTT) the chain is on the extracellular side. A helical transmembrane segment spans residues 203–223 (LFITAFVIPCLVIIACYAKIF). Residues 224–313 (WVVHKSEQRL…AKRNEWRITK (90 aa)) lie on the Cytoplasmic side of the membrane. Residues 258-302 (LPSGAECQPSNRVSSDSSSSFSIDVPETAPSGKQQPTRVKDQREV) are disordered. Positions 267–279 (SNRVSSDSSSSFS) are enriched in low complexity. A helical transmembrane segment spans residues 314–334 (MVLAIFLSFVVCYLPITIVKV). Residues 335–345 (ADKNVEHPSLH) lie on the Extracellular side of the membrane. Residues 346 to 366 (ICSYILLYLSACINPIIYVIM) traverse the membrane as a helical segment. Topologically, residues 367–670 (NKQYRKAYKT…LTAKMKFPKD (304 aa)) are cytoplasmic. Disordered regions lie at residues 461–490 (DLIS…GSNS), 562–622 (ELPP…YMNV), and 636–670 (TNAV…FPKD). The segment covering 564-584 (PPTPPATSAPTTPAPPPPSSP) has biased composition (pro residues). Residues 585 to 598 (LHPLSTDSSTTTIS) are compositionally biased toward low complexity. Polar residues predominate over residues 646–660 (GPANTSATVSISGSK).

It belongs to the G-protein coupled receptor 1 family. As to expression, isoform A and isoform B are expressed in the head. Isoform B only is expressed in the body. Expressed in embryonic glial cells that are involved in ensheathment and insulation of the nervous system. Both isoforms are expressed in glia that insulate the larval and adult nervous system. Also expressed in the germ cells, the gut, and the heart.

The protein resides in the cell membrane. In terms of biological role, isoform A and isoform B are required in glia to regulate the acute sensitivity to cocaine and to continuously maintain the proper blood-brain barrier (BBB) function. A moody-mediated signaling pathway functions in glia to regulate nervous system insulation and drug-related behaviors. Galphai and Galphao, and the regulator of G protein signaling, loco, are required in the surface glia to achieve effective insulation. The components function by regulating the cortical actin and thereby stabilizing the extended morphology of the surface glia, which in turn is necessary for the formation of septate junctions of sufficient length to achieve proper sealing of the nerve cord. The protein is G-protein coupled receptor moody of Drosophila melanogaster (Fruit fly).